The chain runs to 273 residues: MTTQQLHEQILQKKSFLCVGLDPDLSKIPAHLLETEDPIFEFNKAIIDATHDLTVGYKPNTAFFEAYGIKGWMSLQKTINYINENYPDIFTIADAKRGDIGNTSSMYAKAFFEDLNFDSVTVAPYMGKDSVEPFLAFENKHTIMLALTSNEGAFDFQTLNTNGTELYKQVLETSKTWKNSQNLMYVVGATKAEYFADIRKIVPDSFLLVPGIGAQGGSLSEVCKYGMNDKIGLLVNSARAIIYASKGTDFAEKAREEALKVQQEMAEIIDSKF.

Catalysis depends on K96, which acts as the Proton donor.

The protein belongs to the OMP decarboxylase family. Type 2 subfamily.

The catalysed reaction is orotidine 5'-phosphate + H(+) = UMP + CO2. The protein operates within pyrimidine metabolism; UMP biosynthesis via de novo pathway; UMP from orotate: step 2/2. This chain is Orotidine 5'-phosphate decarboxylase, found in Flavobacterium johnsoniae (strain ATCC 17061 / DSM 2064 / JCM 8514 / BCRC 14874 / CCUG 350202 / NBRC 14942 / NCIMB 11054 / UW101) (Cytophaga johnsonae).